Consider the following 489-residue polypeptide: Equilibrative nucleobase transporter 1 (489 aa).

A helical transmembrane segment spans residues 17–37 (LLECLGFAGVLFGWTSLVFVF). N-linked (GlcNAc...) asparagine glycosylation is present at N56. The next 4 helical transmembrane spans lie at 72-92 (LIFT…GYIF), 102-122 (LIAI…SADS), 123-143 (AVLL…FLIT), and 158-180 (IITM…KLLY). Phosphoserine is present on S253. T258 carries the phosphothreonine modification. The next 6 membrane-spanning stretches (helical) occupy residues 277–297 (FAWH…FIGT), 318–338 (NAFA…GLLM), 358–380 (AAAL…GFAV), 402–422 (SFLY…EHFG), 426–446 (GLVM…FTLI), and 455–475 (LYVN…PFLV).

The protein belongs to the SLC43A transporter (TC 2.A.1.44) family.

Its subcellular location is the basolateral cell membrane. It carries out the reaction adenine(out) = adenine(in). The enzyme catalyses guanine(out) = guanine(in). It catalyses the reaction hypoxanthine(out) = hypoxanthine(in). Its function is as follows. Sodium-independent purine-selective nucleobase transporter which mediates the equilibrative transport of extracellular purine nucleobases such as adenine, guanine and hypoxanthine. May regulate fatty acid (FA) transport in adipocytes, acting as a positive regulator of FA efflux and as a negative regulator of FA uptake. This chain is Equilibrative nucleobase transporter 1 (SLC43A3), found in Bos taurus (Bovine).